The following is a 366-amino-acid chain: MSQVRDTPVKLFGWTITPVSHDPYSSSSHVLPDSSSSSSSSSLSLRPHMMNNQSVTDNTSLKLSSNLNNESKETSENSDDQHSEITTITSEEEKTTELKKPDKILPCPRCNSADTKFCYYNNYNVNQPRHFCRKCQRYWTAGGSMRIVPVGSGRRKNKGWVSSDQYLHITSEDTDNYNSSSTKILSFESSDSLVTERPKHQSNEVKINAEPVSQEPNNFQGLLPPQASPVSPPWPYQYPPNPSFYHMPVYWGCAIPVWSTLDTSTCLGKRTRDETSHETVKESKNAFERTSLLLESQSIKNETSMATNNHVWYPVPMTREKTQEFSFFSNGAETKSSNNRFVPETYLNLQANPAAMARSMNFRESI.

Residues 22–103 (DPYSSSSHVL…KTTELKKPDK (82 aa)) are disordered. Low complexity-rich tracts occupy residues 25 to 45 (SSSS…SLSL) and 56 to 69 (TDNT…NLNN). Basic and acidic residues-rich tracts occupy residues 70–83 (ESKE…DQHS) and 91–103 (EEEK…KPDK). A Dof-type zinc finger spans residues 105 to 159 (LPCPRCNSADTKFCYYNNYNVNQPRHFCRKCQRYWTAGGSMRIVPVGSGRRKNKG). Cys-107, Cys-110, Cys-132, and Cys-135 together coordinate Zn(2+).

The protein localises to the nucleus. Its function is as follows. Transcription factor that binds specifically to a 5'-AA[AG]G-3' consensus core sequence. In Arabidopsis thaliana (Mouse-ear cress), this protein is Dof zinc finger protein DOF1.3 (DOF1.3).